Reading from the N-terminus, the 119-residue chain is Movement protein TGB2 (119 aa).

Residues 1–13 are Cytoplasmic-facing; sequence MVRNNEIGARPNK. The helical transmembrane segment at 14–34 threads the bilayer; the sequence is YWPVVAAVVAICLFGFLTVTN. The Lumenal portion of the chain corresponds to 35–79; that stretch reads QKHATQSGDNIHKFANGGQYRDGSKSIKYNCNNPRAYNGSSSNIT. A helical membrane pass occupies residues 80 to 100; the sequence is FSQLFLPVLLIGAALYAYLWF. Topologically, residues 101–119 are cytoplasmic; that stretch reads TRPDCSVTCRGDCCRSYGG.

The protein belongs to the virgaviridae/benyvirus TGB2 movement protein family. In terms of assembly, interacts with movement protein TGB3. TGB1-TGB3-TGB2 complex formation is enhanced by ATP hydrolysis.

The protein localises to the host cell junction. It localises to the host plasmodesma. It is found in the host endoplasmic reticulum membrane. Its subcellular location is the host cytoplasm. The protein resides in the host cytoskeleton. The protein localises to the host chloroplast envelope. Its function is as follows. Participates in the transport of viral genome to neighboring plant cells directly through plasmodesmata, without any budding. TGBp2 and TGBp3 are necessary for intracellular delivery of TGBp1-containing vRNPs to plasmodesmata. Can gate plasmodesmata and increase their size exclusion limit. To a lesser extent than TGB3, induces host actin cytoskeleton network thickening, which probably plays a major role in virus cell-to-cell movement. Binds ssRNA in a sequence non-specific manner. The chain is Movement protein TGB2 from Potato mop-top virus (isolate Potato/Sweden/Sw) (PMTV).